The chain runs to 110 residues: QGDKRDICRLPPEQGPCKGRIPRYFYNPASRMCESFIYGGCKGNKNNFKTKAECVRACRPPERPGVCPKTSGPGICLHGCDSDSDCKEGQKCCFDGCGYICLTVAPSGSP.

Glutamine 1 is modified (pyrrolidone carboxylic acid). Residues 8-58 (CRLPPEQGPCKGRIPRYFYNPASRMCESFIYGGCKGNKNNFKTKAECVRAC) enclose the BPTI/Kunitz inhibitor domain. 7 cysteine pairs are disulfide-bonded: cysteine 8-cysteine 58, cysteine 17-cysteine 41, cysteine 33-cysteine 54, cysteine 67-cysteine 92, cysteine 76-cysteine 97, cysteine 80-cysteine 93, and cysteine 86-cysteine 101. The WAP domain occupies 60–105 (PPERPGVCPKTSGPGICLHGCDSDSDCKEGQKCCFDGCGYICLTVA).

The first domain inhibits trypsin; the second one inhibitis subtilisin. The chain is Chelonianin from Caretta caretta (Loggerhead sea turtle).